A 182-amino-acid polypeptide reads, in one-letter code: T-cell surface glycoprotein CD3 gamma chain (182 aa).

A signal peptide spans 1 to 22 (MEQGKGLAVLILAIILLQGTLA). The Extracellular portion of the chain corresponds to 23–116 (QSIKGNHLVK…CIELNAATIS (94 aa)). The region spanning 37–94 (QEDGSVLLTCDAEAKNITWFKDGKMIGFLTEDKKKWNLGSNAKDPRGMYQCKGSQNKS) is the Ig-like domain. C46 and C87 form a disulfide bridge. 2 N-linked (GlcNAc...) asparagine glycosylation sites follow: N52 and N92. Residues 117 to 137 (GFLFAEIVSIFVLAVGVYFIA) form a helical membrane-spanning segment. Topologically, residues 138-182 (GQDGVRQSRASDKQTLLPNDQLYQPLKDREDDQYSHLQGNQLRRN) are cytoplasmic. S145 is subject to Phosphoserine. S148 bears the Phosphoserine; by PKC mark. Residues 149-177 (DKQTLLPNDQLYQPLKDREDDQYSHLQGN) form the ITAM domain. The Di-leucine motif signature appears at 153 to 154 (LL).

The TCR-CD3 complex is composed of a CD3D/CD3E and a CD3G/CD3E heterodimers that preferentially associate with TCRalpha and TCRbeta, respectively, to form TCRalpha/CD3E/CD3G and TCRbeta/CD3G/CD3E trimers. In turn, the hexamer interacts with CD3Z homodimer to form the TCR-CD3 complex. Alternatively, TCRalpha and TCRbeta can be replaced by TCRgamma and TCRdelta. In terms of processing, phosphorylated on Tyr residues after T-cell receptor triggering by LCK in association with CD4/CD8. Phosphorylated also by PKC; leading to the TCR complex down-regulation. Phosphorylated on Tyr residues after T-cell receptor triggering by LCK in association with CD4/CD8.

Its subcellular location is the cell membrane. In terms of biological role, part of the TCR-CD3 complex present on T-lymphocyte cell surface that plays an essential role in adaptive immune response. When antigen presenting cells (APCs) activate T-cell receptor (TCR), TCR-mediated signals are transmitted across the cell membrane by the CD3 chains CD3D, CD3E, CD3G and CD3Z. All CD3 chains contain immunoreceptor tyrosine-based activation motifs (ITAMs) in their cytoplasmic domain. Upon TCR engagement, these motifs become phosphorylated by Src family protein tyrosine kinases LCK and FYN, resulting in the activation of downstream signaling pathways. In addition to this role of signal transduction in T-cell activation, CD3G plays an essential role in the dynamic regulation of TCR expression at the cell surface. Indeed, constitutive TCR cycling is dependent on the di-leucine-based (diL) receptor-sorting motif present in CD3G. This chain is T-cell surface glycoprotein CD3 gamma chain (CD3G), found in Homo sapiens (Human).